We begin with the raw amino-acid sequence, 390 residues long: Ribonuclease D (390 aa).

Residues 7 to 173 (ITDSATLAAL…TLFPMLLKEL (167 aa)) form the 3'-5' exonuclease domain. An HRDC domain is found at 212-293 (KADILGRLKA…ENAEALRPEE (82 aa)).

This sequence belongs to the RNase D family. The cofactor is a divalent metal cation.

Its subcellular location is the cytoplasm. The catalysed reaction is Exonucleolytic cleavage that removes extra residues from the 3'-terminus of tRNA to produce 5'-mononucleotides.. In terms of biological role, exonuclease involved in the 3' processing of various precursor tRNAs. Initiates hydrolysis at the 3'-terminus of an RNA molecule and releases 5'-mononucleotides. The sequence is that of Ribonuclease D from Zymomonas mobilis subsp. mobilis (strain ATCC 31821 / ZM4 / CP4).